Consider the following 322-residue polypeptide: Cytochrome c biogenesis protein CcsA (322 aa).

A run of 7 helical transmembrane segments spans residues 9 to 29 (IFTHISFSIVSIVIIIHLITL), 44 to 64 (GMIVTFLCLTGLLITRWIYSG), 71 to 91 (LYESLIFLSWSFSLIHIVPYF), 143 to 163 (MILSYAALLCGSLLSVALLVI), 226 to 246 (VISLGFIFLTIGILSGAVWAN), 255 to 275 (WDPKETWAFITWIVFAIYLHI), and 287 to 307 (AIVATLGFLIIWICYFGVNLL).

Belongs to the CcmF/CycK/Ccl1/NrfE/CcsA family. As to quaternary structure, may interact with Ccs1.

The protein localises to the plastid. It is found in the chloroplast thylakoid membrane. Functionally, required during biogenesis of c-type cytochromes (cytochrome c6 and cytochrome f) at the step of heme attachment. The chain is Cytochrome c biogenesis protein CcsA from Lactuca sativa (Garden lettuce).